The sequence spans 177 residues: MSGTEEIRWVTLGYVMGAFGLKGEMRVRSLTERPDGIFDHPVWWLFNPKQKTRQEMRLGSGRLHGKGVVATLAGVTTREAVQALFGTEIQVPRSMLPDGGDDPGVDGIWADLIGCQVVEVDGTELGRVVEMMATGANDVLIVRGGPEGEKLLPYIEEVVVELDLDRQIIKVKLMEGM.

A PRC barrel domain is found at 104–177 (GVDGIWADLI…IIKVKLMEGM (74 aa)).

This sequence belongs to the RimM family. In terms of assembly, binds ribosomal protein uS19.

The protein resides in the cytoplasm. Functionally, an accessory protein needed during the final step in the assembly of 30S ribosomal subunit, possibly for assembly of the head region. Essential for efficient processing of 16S rRNA. May be needed both before and after RbfA during the maturation of 16S rRNA. It has affinity for free ribosomal 30S subunits but not for 70S ribosomes. The sequence is that of Ribosome maturation factor RimM from Magnetococcus marinus (strain ATCC BAA-1437 / JCM 17883 / MC-1).